The chain runs to 161 residues: Large ribosomal subunit protein uL15 (161 aa).

A disordered region spans residues 1 to 39 (MTKLNELAPREGSTKGRMRVGRGPGSGKGKTAGRGVKGQ). Residues 22–36 (RGPGSGKGKTAGRGV) show a composition bias toward gly residues.

It belongs to the universal ribosomal protein uL15 family. In terms of assembly, part of the 50S ribosomal subunit.

Binds to the 23S rRNA. This is Large ribosomal subunit protein uL15 from Caulobacter vibrioides (strain ATCC 19089 / CIP 103742 / CB 15) (Caulobacter crescentus).